Reading from the N-terminus, the 692-residue chain is Elongation factor G (692 aa).

Residues 8–282 (KDTRNIGIMA…AVLDYLPSPL (275 aa)) enclose the tr-type G domain. GTP-binding positions include 17–24 (AHIDAGKT), 81–85 (DTPGH), and 135–138 (NKMD).

The protein belongs to the TRAFAC class translation factor GTPase superfamily. Classic translation factor GTPase family. EF-G/EF-2 subfamily.

It localises to the cytoplasm. Catalyzes the GTP-dependent ribosomal translocation step during translation elongation. During this step, the ribosome changes from the pre-translocational (PRE) to the post-translocational (POST) state as the newly formed A-site-bound peptidyl-tRNA and P-site-bound deacylated tRNA move to the P and E sites, respectively. Catalyzes the coordinated movement of the two tRNA molecules, the mRNA and conformational changes in the ribosome. The protein is Elongation factor G of Shouchella clausii (strain KSM-K16) (Alkalihalobacillus clausii).